Reading from the N-terminus, the 427-residue chain is 5'-deoxyadenosine deaminase (427 aa).

Zn(2+)-binding residues include histidine 62 and histidine 64. Positions 91 and 183 each coordinate substrate. Histidine 210 lines the Zn(2+) pocket. Substrate-binding residues include glutamate 213 and aspartate 298. Aspartate 298 contacts Zn(2+).

The protein belongs to the metallo-dependent hydrolases superfamily. MTA/SAH deaminase family. Homotetramer. It depends on Zn(2+) as a cofactor.

It catalyses the reaction 5'-deoxyadenosine + H2O + H(+) = 5'-deoxyinosine + NH4(+). It carries out the reaction S-adenosyl-L-homocysteine + H2O + H(+) = S-inosyl-L-homocysteine + NH4(+). The enzyme catalyses S-methyl-5'-thioadenosine + H2O + H(+) = S-methyl-5'-thioinosine + NH4(+). The catalysed reaction is adenosine + H2O + H(+) = inosine + NH4(+). It participates in amino-acid biosynthesis; S-adenosyl-L-methionine biosynthesis. Functionally, catalyzes the deamination of three SAM-derived enzymatic products, namely 5'-deoxyadenosine, S-adenosyl-L-homocysteine, and 5'-methylthioadenosine, to produce the inosine analogs. Can also deaminate adenosine. The preferred substrate for this enzyme is 5'-deoxyadenosine, but all these substrates are efficiently deaminated. Likely functions in a S-adenosyl-L-methionine (SAM) recycling pathway from S-adenosyl-L-homocysteine (SAH) produced from SAM-dependent methylation reactions. May also be involved in the recycling of 5'-deoxyadenosine, whereupon the 5'-deoxyribose moiety of 5'-deoxyinosine is further metabolized to deoxyhexoses used for the biosynthesis of aromatic amino acids in methanogens. In Methanothermobacter thermautotrophicus (strain ATCC 29096 / DSM 1053 / JCM 10044 / NBRC 100330 / Delta H) (Methanobacterium thermoautotrophicum), this protein is 5'-deoxyadenosine deaminase.